The chain runs to 791 residues: Exocyst complex component EXO84 (791 aa).

Residues 16-101 are disordered; it reads RNRKSRAVWQ…GDLNSNKKQS (86 aa). Residues 23 to 42 show a composition bias toward polar residues; it reads VWQNNNTTTHNNPYANLSTG. Over residues 70–83 the composition is skewed to low complexity; that stretch reads TGNNNKSNTSGNLL. Residues 190–229 adopt a coiled-coil conformation; that stretch reads RDIKDNINQNQKNILQLTKDLKETQEELIELRGTTKELYE. Residue K193 forms a Glycyl lysine isopeptide (Lys-Gly) (interchain with G-Cter in ubiquitin) linkage. Residues 247–256 show a composition bias toward basic and acidic residues; it reads EPETQKELHS. Disordered regions lie at residues 247-271 and 432-495; these read EPET…NKKK and ERLL…NSTD. Over residues 438–447 the composition is skewed to polar residues; that stretch reads RLSSPSNNNG. Residues 448-460 are compositionally biased toward basic and acidic residues; that stretch reads DSKEEKRQLRESL. Residues 521–577 adopt a coiled-coil conformation; the sequence is ANNGKSQFFNEIKTLEDRLDDVDVEISHNQYAEAVELISIIESKLRNIENALTNQRN.

This sequence belongs to the EXO84 family. In terms of assembly, component of the exocyst complex.

The protein resides in the cytoplasmic vesicle. Its subcellular location is the secretory vesicle. Functionally, involved in the secretory pathway as part of the exocyst complex which tethers secretory vesicles to the sites of exocytosis. Plays a role in both the assembly of the exocyst and the polarization of this complex to specific sites of the plasma membrane for exocytosis. Also involved in assembly of the spliceosome. This Candida albicans (strain SC5314 / ATCC MYA-2876) (Yeast) protein is Exocyst complex component EXO84 (EXO84).